The following is a 123-amino-acid chain: Small ribosomal subunit protein uS12 (123 aa).

Asp-90 bears the 3-methylthioaspartic acid mark.

This sequence belongs to the universal ribosomal protein uS12 family. As to quaternary structure, part of the 30S ribosomal subunit. Contacts proteins S8 and S17. May interact with IF1 in the 30S initiation complex.

Its function is as follows. With S4 and S5 plays an important role in translational accuracy. In terms of biological role, interacts with and stabilizes bases of the 16S rRNA that are involved in tRNA selection in the A site and with the mRNA backbone. Located at the interface of the 30S and 50S subunits, it traverses the body of the 30S subunit contacting proteins on the other side and probably holding the rRNA structure together. The combined cluster of proteins S8, S12 and S17 appears to hold together the shoulder and platform of the 30S subunit. The protein is Small ribosomal subunit protein uS12 of Ehrlichia ruminantium (strain Gardel).